The primary structure comprises 1138 residues: Mastermind-like protein 3 (1138 aa).

Positions 37 to 48 (PNSTPAAPSSNH) are enriched in polar residues. 6 disordered regions span residues 37-68 (PNST…AAVP), 119-148 (EQRA…ASAE), 169-188 (RSPL…FSPT), 207-237 (PSNM…THTP), 334-480 (EEKK…QRAK), and 503-547 (QQQQ…PQAF). Residues 52-64 (GGCGGSGGPGGGS) are compositionally biased toward gly residues. Composition is skewed to polar residues over residues 130–139 (GKQQHPSKPQ) and 173–188 (NGDQ…FSPT). 2 stretches are compositionally biased toward polar residues: residues 343-359 (QPAT…SVKS) and 372-394 (GSPQ…ATSL). Residues 395 to 411 (PSVASTPAAPNPASSPA) are compositionally biased toward low complexity. The segment covering 414 to 426 (AVQSPQTPNQAHT) has biased composition (polar residues). Positions 467 to 480 (QLKQMAAQQQQRAK) are enriched in low complexity. K603 bears the N6-acetyllysine mark. 5 disordered regions span residues 615 to 662 (RMTP…PRAH), 691 to 721 (HGQE…MVSG), 968 to 991 (LQGM…YPLQ), 1024 to 1084 (AAMG…SQAY), and 1090 to 1109 (QDVS…PGLP). Low complexity predominate over residues 633–649 (QQQQQQQQQQQQQQQQQ). Positions 1064-1084 (PPAQQQIPSGSFAPSSQSQAY) are enriched in polar residues.

This sequence belongs to the mastermind family. In terms of assembly, interacts through its N-terminal region with the ankyrin repeat region of the Notch proteins NOTCH1, NOTCH2, NOTCH3 and NOTCH4. Forms a DNA-binding complex with Notch proteins and RBPSUH/RBP-J kappa.

Its subcellular location is the nucleus speckle. In terms of biological role, acts as a transcriptional coactivator for NOTCH proteins. Has been shown to amplify NOTCH-induced transcription of HES1. The protein is Mastermind-like protein 3 of Homo sapiens (Human).